The following is a 366-amino-acid chain: UDP-N-acetylglucosamine--N-acetylmuramyl-(pentapeptide) pyrophosphoryl-undecaprenol N-acetylglucosamine transferase (366 aa).

UDP-N-acetyl-alpha-D-glucosamine contacts are provided by residues 14 to 16 (TGG), asparagine 125, arginine 168, serine 196, and glutamine 297.

It belongs to the glycosyltransferase 28 family. MurG subfamily.

It is found in the cell inner membrane. The catalysed reaction is di-trans,octa-cis-undecaprenyl diphospho-N-acetyl-alpha-D-muramoyl-L-alanyl-D-glutamyl-meso-2,6-diaminopimeloyl-D-alanyl-D-alanine + UDP-N-acetyl-alpha-D-glucosamine = di-trans,octa-cis-undecaprenyl diphospho-[N-acetyl-alpha-D-glucosaminyl-(1-&gt;4)]-N-acetyl-alpha-D-muramoyl-L-alanyl-D-glutamyl-meso-2,6-diaminopimeloyl-D-alanyl-D-alanine + UDP + H(+). Its pathway is cell wall biogenesis; peptidoglycan biosynthesis. In terms of biological role, cell wall formation. Catalyzes the transfer of a GlcNAc subunit on undecaprenyl-pyrophosphoryl-MurNAc-pentapeptide (lipid intermediate I) to form undecaprenyl-pyrophosphoryl-MurNAc-(pentapeptide)GlcNAc (lipid intermediate II). This chain is UDP-N-acetylglucosamine--N-acetylmuramyl-(pentapeptide) pyrophosphoryl-undecaprenol N-acetylglucosamine transferase, found in Bradyrhizobium diazoefficiens (strain JCM 10833 / BCRC 13528 / IAM 13628 / NBRC 14792 / USDA 110).